A 220-amino-acid polypeptide reads, in one-letter code: Metalloproteinase inhibitor 2 (220 aa).

An N-terminal signal peptide occupies residues 1–26; it reads MGAAARSLRLALGLLLLATLLRPADA. Cysteine 27 is a Zn(2+) binding site. 2 involved in metalloproteinase-binding regions span residues 27–30 and 95–96; these read CSCS and SA. 6 disulfides stabilise this stretch: cysteine 27-cysteine 98, cysteine 29-cysteine 127, cysteine 39-cysteine 152, cysteine 154-cysteine 201, cysteine 159-cysteine 164, and cysteine 172-cysteine 193. One can recognise an NTR domain in the interval 27–152; that stretch reads CSCSPVHPQQ…SLNHRYQMGC (126 aa).

This sequence belongs to the protease inhibitor I35 (TIMP) family. As to quaternary structure, interacts (via the C-terminal) with MMP2 (via the C-terminal PEX domain); the interaction inhibits the MMP2 activity. The activity of TIMP2 is dependent on the presence of disulfide bonds.

The protein resides in the secreted. Complexes with metalloproteinases (such as collagenases) and irreversibly inactivates them by binding to their catalytic zinc cofactor. The chain is Metalloproteinase inhibitor 2 (Timp2) from Rattus norvegicus (Rat).